The primary structure comprises 269 residues: 3-methyl-2-oxobutanoate hydroxymethyltransferase (269 aa).

Residues Asp42 and Asp81 each coordinate Mg(2+). 3-methyl-2-oxobutanoate contacts are provided by residues 42–43 (DS), Asp81, and Lys111. Glu113 is a binding site for Mg(2+). The active-site Proton acceptor is Glu179. Residues 250–269 (SGEFPRESHSHTEDELDDLY) form a disordered region. The span at 252 to 262 (EFPRESHSHTE) shows a compositional bias: basic and acidic residues.

It belongs to the PanB family. Homodecamer; pentamer of dimers. Requires Mg(2+) as cofactor.

The protein localises to the cytoplasm. It carries out the reaction 3-methyl-2-oxobutanoate + (6R)-5,10-methylene-5,6,7,8-tetrahydrofolate + H2O = 2-dehydropantoate + (6S)-5,6,7,8-tetrahydrofolate. Its pathway is cofactor biosynthesis; coenzyme A biosynthesis. Functionally, catalyzes the reversible reaction in which hydroxymethyl group from 5,10-methylenetetrahydrofolate is transferred onto alpha-ketoisovalerate to form ketopantoate. This chain is 3-methyl-2-oxobutanoate hydroxymethyltransferase, found in Haloarcula marismortui (strain ATCC 43049 / DSM 3752 / JCM 8966 / VKM B-1809) (Halobacterium marismortui).